A 119-amino-acid polypeptide reads, in one-letter code: Ribonuclease P protein component (119 aa).

This sequence belongs to the RnpA family. As to quaternary structure, consists of a catalytic RNA component (M1 or rnpB) and a protein subunit.

The enzyme catalyses Endonucleolytic cleavage of RNA, removing 5'-extranucleotides from tRNA precursor.. RNaseP catalyzes the removal of the 5'-leader sequence from pre-tRNA to produce the mature 5'-terminus. It can also cleave other RNA substrates such as 4.5S RNA. The protein component plays an auxiliary but essential role in vivo by binding to the 5'-leader sequence and broadening the substrate specificity of the ribozyme. The chain is Ribonuclease P protein component from Nitrosococcus oceani (strain ATCC 19707 / BCRC 17464 / JCM 30415 / NCIMB 11848 / C-107).